Reading from the N-terminus, the 153-residue chain is uncharacterized protein (153 aa).

An N-terminal signal peptide occupies residues 1–19; the sequence is MKACLLLFFYFSFICQLHG.

This is an uncharacterized protein from Escherichia coli (strain K12).